A 194-amino-acid chain; its full sequence is Probable nicotinate-nucleotide adenylyltransferase (194 aa).

This sequence belongs to the NadD family.

It carries out the reaction nicotinate beta-D-ribonucleotide + ATP + H(+) = deamido-NAD(+) + diphosphate. The protein operates within cofactor biosynthesis; NAD(+) biosynthesis; deamido-NAD(+) from nicotinate D-ribonucleotide: step 1/1. Catalyzes the reversible adenylation of nicotinate mononucleotide (NaMN) to nicotinic acid adenine dinucleotide (NaAD). This chain is Probable nicotinate-nucleotide adenylyltransferase, found in Christiangramia forsetii (strain DSM 17595 / CGMCC 1.15422 / KT0803) (Gramella forsetii).